We begin with the raw amino-acid sequence, 660 residues long: Protein translocase subunit SecA 2 (660 aa).

Residues Gln113, 131 to 135, and Asp539 each bind ATP; that span reads GEGKT.

It belongs to the SecA family. As to quaternary structure, monomer and homodimer. Part of the essential Sec protein translocation apparatus which comprises SecA, SecYEG and auxiliary proteins SecDF-YajC and YidC.

Its subcellular location is the cell inner membrane. The protein resides in the cytoplasm. The enzyme catalyses ATP + H2O + cellular proteinSide 1 = ADP + phosphate + cellular proteinSide 2.. Part of the Sec protein translocase complex. Interacts with the SecYEG preprotein conducting channel. Has a central role in coupling the hydrolysis of ATP to the transfer of proteins into and across the cell membrane, serving both as a receptor for the preprotein-SecB complex and as an ATP-driven molecular motor driving the stepwise translocation of polypeptide chains across the membrane. This is Protein translocase subunit SecA 2 from Bordetella avium (strain 197N).